Consider the following 166-residue polypeptide: Transmembrane protein 190 (166 aa).

A signal peptide spans 1-21 (MVGSGISALGLLLLMQGSVDA). The Extracellular segment spans residues 22–81 (NGIQGFFYPWSCEGDVWDRESCGGQAAIENPNLCLRLRCCYRDGVCYHQRPDENMRRKHM). Residues 31–71 (WSCEGDVWDRESCGGQAAIENPNLCLRLRCCYRDGVCYHQR) form the P-type domain. 3 disulfide bridges follow: Cys-33–Cys-61, Cys-43–Cys-60, and Cys-55–Cys-67. The helical transmembrane segment at 82–102 (WALGWTCGSLLFLITSICLFW) threads the bilayer. Residues 103-166 (WARRQDMLHL…VSGEDTGGEE (64 aa)) lie on the Cytoplasmic side of the membrane. The tract at residues 130–166 (LSKDRRSANKSTTVLQSPGGEVETAAAVSGEDTGGEE) is disordered.

Detected in testis and in a mixture of spermatogenic cells at various stages (testicular germ cells). Not detected in heart, brain, spleen, lung, liver, skeletal muscle and kidney.

It localises to the membrane. The protein is Transmembrane protein 190 (Tmem190) of Mus musculus (Mouse).